A 97-amino-acid chain; its full sequence is Large ribosomal subunit protein bL28 (97 aa).

This sequence belongs to the bacterial ribosomal protein bL28 family.

The sequence is that of Large ribosomal subunit protein bL28 from Rickettsia prowazekii (strain Madrid E).